A 278-amino-acid polypeptide reads, in one-letter code: Large ribosomal subunit protein uL2 (278 aa).

Residues His-201–Lys-278 form a disordered region. Residues Gly-210–Val-221 show a composition bias toward basic residues.

Belongs to the universal ribosomal protein uL2 family. Part of the 50S ribosomal subunit. Forms a bridge to the 30S subunit in the 70S ribosome.

One of the primary rRNA binding proteins. Required for association of the 30S and 50S subunits to form the 70S ribosome, for tRNA binding and peptide bond formation. It has been suggested to have peptidyltransferase activity; this is somewhat controversial. Makes several contacts with the 16S rRNA in the 70S ribosome. This Rhizobium meliloti (strain 1021) (Ensifer meliloti) protein is Large ribosomal subunit protein uL2.